Here is a 194-residue protein sequence, read N- to C-terminus: Anthranilate synthase component 2 (194 aa).

The Glutamine amidotransferase type-1 domain maps to Lys2–Ser194. Gly57 to Gly59 serves as a coordination point for L-glutamine. Cys84 (nucleophile; for GATase activity) is an active-site residue. Residues Gln88 and Ser134 to Leu135 contribute to the L-glutamine site. Active-site for GATase activity residues include His170 and Glu172.

In terms of assembly, heterotetramer consisting of two non-identical subunits: a beta subunit (TrpG) and a large alpha subunit (TrpE).

The catalysed reaction is chorismate + L-glutamine = anthranilate + pyruvate + L-glutamate + H(+). The protein operates within amino-acid biosynthesis; L-tryptophan biosynthesis; L-tryptophan from chorismate: step 1/5. Its function is as follows. Part of a heterotetrameric complex that catalyzes the two-step biosynthesis of anthranilate, an intermediate in the biosynthesis of L-tryptophan. In the first step, the glutamine-binding beta subunit (TrpG) of anthranilate synthase (AS) provides the glutamine amidotransferase activity which generates ammonia as a substrate that, along with chorismate, is used in the second step, catalyzed by the large alpha subunit of AS (TrpE) to produce anthranilate. In the absence of TrpG, TrpE can synthesize anthranilate directly from chorismate and high concentrations of ammonia. The protein is Anthranilate synthase component 2 (trpG) of Helicobacter pylori (strain J99 / ATCC 700824) (Campylobacter pylori J99).